We begin with the raw amino-acid sequence, 313 residues long: Porphobilinogen deaminase (313 aa).

The residue at position 242 (cysteine 242) is an S-(dipyrrolylmethanemethyl)cysteine.

It belongs to the HMBS family. Monomer. Dipyrromethane is required as a cofactor.

It catalyses the reaction 4 porphobilinogen + H2O = hydroxymethylbilane + 4 NH4(+). The protein operates within porphyrin-containing compound metabolism; protoporphyrin-IX biosynthesis; coproporphyrinogen-III from 5-aminolevulinate: step 2/4. Its function is as follows. Tetrapolymerization of the monopyrrole PBG into the hydroxymethylbilane pre-uroporphyrinogen in several discrete steps. The chain is Porphobilinogen deaminase from Pseudomonas syringae pv. syringae (strain B728a).